Reading from the N-terminus, the 650-residue chain is Chaperone protein DnaK (650 aa).

A Phosphothreonine; by autocatalysis modification is found at threonine 200. Residues 611 to 636 (AQQAGAAGAAGAAAEGASAQGGAQPA) show a composition bias toward low complexity. Positions 611–650 (AQQAGAAGAAGAAAEGASAQGGAQPADDVVDADFKEVKKD) are disordered.

The protein belongs to the heat shock protein 70 family.

Acts as a chaperone. The chain is Chaperone protein DnaK from Burkholderia mallei (strain NCTC 10247).